The primary structure comprises 491 residues: Cytochrome P450 2F5 (491 aa).

C436 is a binding site for heme.

This sequence belongs to the cytochrome P450 family. Requires heme as cofactor.

The protein localises to the endoplasmic reticulum membrane. Its subcellular location is the microsome membrane. It carries out the reaction an organic molecule + reduced [NADPH--hemoprotein reductase] + O2 = an alcohol + oxidized [NADPH--hemoprotein reductase] + H2O + H(+). In terms of biological role, cytochromes P450 are a group of heme-thiolate monooxygenases. In liver microsomes, this enzyme is involved in an NADPH-dependent electron transport pathway. It oxidizes a variety of structurally unrelated compounds, including steroids, fatty acids, and xenobiotics. The sequence is that of Cytochrome P450 2F5 (CYP2F5) from Gorilla gorilla gorilla (Western lowland gorilla).